The sequence spans 328 residues: Stress response kinase A (328 aa).

Aspartate 201 serves as the catalytic Proton acceptor. Mg(2+)-binding residues include asparagine 206 and aspartate 217. Aspartate 217 is an active-site residue.

It belongs to the SrkA/RdoA protein kinase family. As to quaternary structure, monomer. Mg(2+) serves as cofactor.

It localises to the cytoplasm. It carries out the reaction L-seryl-[protein] + ATP = O-phospho-L-seryl-[protein] + ADP + H(+). The catalysed reaction is L-threonyl-[protein] + ATP = O-phospho-L-threonyl-[protein] + ADP + H(+). Functionally, a protein kinase that phosphorylates Ser and Thr residues. Probably acts to suppress the effects of stress linked to accumulation of reactive oxygen species. Probably involved in the extracytoplasmic stress response. The sequence is that of Stress response kinase A from Salmonella choleraesuis (strain SC-B67).